The following is a 156-amino-acid chain: SsrA-binding protein (156 aa).

The protein belongs to the SmpB family.

Its subcellular location is the cytoplasm. Its function is as follows. Required for rescue of stalled ribosomes mediated by trans-translation. Binds to transfer-messenger RNA (tmRNA), required for stable association of tmRNA with ribosomes. tmRNA and SmpB together mimic tRNA shape, replacing the anticodon stem-loop with SmpB. tmRNA is encoded by the ssrA gene; the 2 termini fold to resemble tRNA(Ala) and it encodes a 'tag peptide', a short internal open reading frame. During trans-translation Ala-aminoacylated tmRNA acts like a tRNA, entering the A-site of stalled ribosomes, displacing the stalled mRNA. The ribosome then switches to translate the ORF on the tmRNA; the nascent peptide is terminated with the 'tag peptide' encoded by the tmRNA and targeted for degradation. The ribosome is freed to recommence translation, which seems to be the essential function of trans-translation. The polypeptide is SsrA-binding protein (Bacillus pumilus (strain SAFR-032)).